Consider the following 398-residue polypeptide: Carbamoyl phosphate synthase large chain (398 aa).

One can recognise an ATP-grasp domain in the interval 1-187 (KLGVPQPEGG…LAKIAAKVIV (187 aa)). A carbamoyl phosphate synthetic domain region spans residues 1-255 (KLGVPQPEGG…YKAELAADNV (255 aa)). Positions 32, 71, 73, 78, 103, 104, 105, 106, 146, and 158 each coordinate ATP. Mg(2+) contacts are provided by glutamine 146, glutamate 158, and asparagine 160. 3 residues coordinate Mn(2+): glutamine 146, glutamate 158, and asparagine 160. The MGS-like domain occupies 254 to 395 (NVLPLTGKVF…NEYHKEMEEE (142 aa)). The allosteric domain stretch occupies residues 256–398 (LPLTGKVFLS…HKEMEEENKV (143 aa)).

The protein belongs to the CarB family. Composed of two chains; the small (or glutamine) chain promotes the hydrolysis of glutamine to ammonia, which is used by the large (or ammonia) chain to synthesize carbamoyl phosphate. Tetramer of heterodimers (alpha,beta)4. Mg(2+) is required as a cofactor. The cofactor is Mn(2+).

It carries out the reaction hydrogencarbonate + L-glutamine + 2 ATP + H2O = carbamoyl phosphate + L-glutamate + 2 ADP + phosphate + 2 H(+). The catalysed reaction is hydrogencarbonate + NH4(+) + 2 ATP = carbamoyl phosphate + 2 ADP + phosphate + 2 H(+). It participates in amino-acid biosynthesis; L-arginine biosynthesis; carbamoyl phosphate from bicarbonate: step 1/1. It functions in the pathway pyrimidine metabolism; UMP biosynthesis via de novo pathway; (S)-dihydroorotate from bicarbonate: step 1/3. Functionally, large subunit of the glutamine-dependent carbamoyl phosphate synthetase (CPSase). CPSase catalyzes the formation of carbamoyl phosphate from the ammonia moiety of glutamine, carbonate, and phosphate donated by ATP, constituting the first step of 2 biosynthetic pathways, one leading to arginine and/or urea and the other to pyrimidine nucleotides. The large subunit (synthetase) binds the substrates ammonia (free or transferred from glutamine from the small subunit), hydrogencarbonate and ATP and carries out an ATP-coupled ligase reaction, activating hydrogencarbonate by forming carboxy phosphate which reacts with ammonia to form carbamoyl phosphate. This chain is Carbamoyl phosphate synthase large chain, found in Methanosarcina barkeri.